The sequence spans 507 residues: MVTIRADEISNIIRERIEQYNREVKIVNTGTVLQVGDGIARIHGLDEVMAGELVEFEEGTIGIALNLESNNVGVVLMGDGLLIQEGSSVKATGRIAQIPVSEAYLGRVVNALAKPIDGRGEISASEFRLIESAAPGIISRRSVYEPLQTGLIAIDSMIPIGRGQRELIIGDRQTGKTAVATDTILNQQGQNVICVYVAIGQKASSVAQVVTTLQERGAMEYTIVVAETADSPATLQYLAPYTGASLAEYFMYRERHTLIIYDDLSKQAQAYRQMSLLLRRPPGREAYPGDVFYLHSRLLERAAKLSSSLGEGSMTALPIVETQSGDVSAYIPTNVISITDGQIFLSADLFNSGIRPAINVGISVSRVGSAAQIKAMKQVAGKLKLELAQFAELEAFAQFASDLDKATQNQLARGQRLRELLKQSQSAPLTVEEQIMTIYTGTNGYLDSLEVGQVRKFLVELRTYLKTNKPQFQEIISSTKTFTEEAEALLKEAIQEQMKRFILQEQA.

170 to 177 (GDRQTGKT) is an ATP binding site.

The protein belongs to the ATPase alpha/beta chains family. In terms of assembly, F-type ATPases have 2 components, CF(1) - the catalytic core - and CF(0) - the membrane proton channel. CF(1) has five subunits: alpha(3), beta(3), gamma(1), delta(1), epsilon(1). CF(0) has four main subunits: a, b, b' and c.

The protein resides in the plastid. The protein localises to the chloroplast thylakoid membrane. It catalyses the reaction ATP + H2O + 4 H(+)(in) = ADP + phosphate + 5 H(+)(out). Functionally, produces ATP from ADP in the presence of a proton gradient across the membrane. The alpha chain is a regulatory subunit. This chain is ATP synthase subunit alpha, chloroplastic, found in Atropa belladonna (Belladonna).